The chain runs to 211 residues: Protein GrpE (211 aa).

Residues 1–13 (MVDKDEEQIKQNV) show a composition bias toward basic and acidic residues. Positions 1–38 (MVDKDEEQIKQNVEEDLSSTVEQTGEENIEFPSAPNHP) are disordered.

This sequence belongs to the GrpE family. Homodimer.

It is found in the cytoplasm. Its function is as follows. Participates actively in the response to hyperosmotic and heat shock by preventing the aggregation of stress-denatured proteins, in association with DnaK and GrpE. It is the nucleotide exchange factor for DnaK and may function as a thermosensor. Unfolded proteins bind initially to DnaJ; upon interaction with the DnaJ-bound protein, DnaK hydrolyzes its bound ATP, resulting in the formation of a stable complex. GrpE releases ADP from DnaK; ATP binding to DnaK triggers the release of the substrate protein, thus completing the reaction cycle. Several rounds of ATP-dependent interactions between DnaJ, DnaK and GrpE are required for fully efficient folding. The protein is Protein GrpE of Protochlamydia amoebophila (strain UWE25).